A 430-amino-acid chain; its full sequence is Glutamate-1-semialdehyde 2,1-aminomutase (430 aa).

An N6-(pyridoxal phosphate)lysine modification is found at Lys-265.

It belongs to the class-III pyridoxal-phosphate-dependent aminotransferase family. HemL subfamily. As to quaternary structure, homodimer. Pyridoxal 5'-phosphate is required as a cofactor.

It localises to the cytoplasm. It carries out the reaction (S)-4-amino-5-oxopentanoate = 5-aminolevulinate. It participates in porphyrin-containing compound metabolism; protoporphyrin-IX biosynthesis; 5-aminolevulinate from L-glutamyl-tRNA(Glu): step 2/2. The polypeptide is Glutamate-1-semialdehyde 2,1-aminomutase (Shewanella sp. (strain MR-4)).